Reading from the N-terminus, the 647-residue chain is Acetyl-coenzyme A synthetase (647 aa).

CoA is bound by residues Arg190–Lys193, Thr310, and Asn334. ATP is bound by residues Gly386–Pro388, Asp410–Thr415, Asp499, and Arg514. Ser522 contributes to the CoA binding site. ATP is bound at residue Arg525. Mg(2+)-binding residues include Val536, His538, and Val541. Arg583 contributes to the CoA binding site. Lys608 carries the post-translational modification N6-acetyllysine.

Belongs to the ATP-dependent AMP-binding enzyme family. Mg(2+) is required as a cofactor. Post-translationally, acetylated. Deacetylation by the SIR2-homolog deacetylase activates the enzyme.

It carries out the reaction acetate + ATP + CoA = acetyl-CoA + AMP + diphosphate. In terms of biological role, catalyzes the conversion of acetate into acetyl-CoA (AcCoA), an essential intermediate at the junction of anabolic and catabolic pathways. AcsA undergoes a two-step reaction. In the first half reaction, AcsA combines acetate with ATP to form acetyl-adenylate (AcAMP) intermediate. In the second half reaction, it can then transfer the acetyl group from AcAMP to the sulfhydryl group of CoA, forming the product AcCoA. This Xanthomonas campestris pv. campestris (strain 8004) protein is Acetyl-coenzyme A synthetase.